Here is a 596-residue protein sequence, read N- to C-terminus: Proton channel OTOP3 (596 aa).

The span at methionine 1 to serine 21 shows a compositional bias: low complexity. The disordered stretch occupies residues methionine 1–alanine 59. Over methionine 1–glutamine 88 the chain is Cytoplasmic. Phosphoserine occurs at positions 21 and 23. Basic and acidic residues predominate over residues alanine 43–alanine 59. Residues leucine 89–methionine 109 form a helical membrane-spanning segment. The Extracellular portion of the chain corresponds to isoleucine 110–glycine 119. The chain crosses the membrane as a helical span at residues aspartate 120–threonine 143. Residues threonine 144–proline 159 are Cytoplasmic-facing. Residues leucine 160–valine 181 traverse the membrane as a helical segment. The Extracellular segment spans residues glycine 182 to glutamine 193. A helical membrane pass occupies residues leucine 194–cysteine 217. The Cytoplasmic portion of the chain corresponds to lysine 218–threonine 225. Residues asparagine 226–threonine 248 form a helical membrane-spanning segment. The Extracellular segment spans residues asparagine 249–proline 295. The chain crosses the membrane as a helical span at residues phenylalanine 296–tryptophan 312. The Cytoplasmic portion of the chain corresponds to lysine 313–isoleucine 338. The chain crosses the membrane as a helical span at residues phenylalanine 339 to phenylalanine 358. Topologically, residues glutamine 359–phenylalanine 372 are extracellular. The chain crosses the membrane as a helical span at residues threonine 373–alanine 395. The Cytoplasmic portion of the chain corresponds to isoleucine 396–serine 413. A helical transmembrane segment spans residues leucine 414–valine 435. The Extracellular segment spans residues alanine 436–leucine 446. Residues asparagine 447–isoleucine 469 form a helical membrane-spanning segment. Residues glutamate 470–glutamate 529 lie on the Cytoplasmic side of the membrane. A helical membrane pass occupies residues isoleucine 530 to phenylalanine 547. Topologically, residues glycine 548–isoleucine 566 are extracellular. A helical transmembrane segment spans residues tryptophan 567–leucine 589. The Cytoplasmic segment spans residues valine 590–alanine 596.

Belongs to the otopetrin family. As to quaternary structure, homodimer.

Its subcellular location is the cell membrane. It carries out the reaction H(+)(in) = H(+)(out). Its activity is regulated as follows. Activated by extracellular acidification. Activated by Zn(2+) under non-acidic conditions. Functionally, proton-selective channel gated by extracellular protons. The polypeptide is Proton channel OTOP3 (Homo sapiens (Human)).